The following is a 637-amino-acid chain: Mitochondrial Rho GTPase 1 (637 aa).

Topologically, residues 1–613 (MSDGETLADV…LRRVFYLSDS (613 aa)) are cytoplasmic. The 178-residue stretch at 7–184 (LADVRIVLIG…FYYAQKAVIY (178 aa)) folds into the Miro 1 domain. GTP contacts are provided by residues 28–35 (SLLEDEWV), 74–78 (ISEMR), and 135–138 (LPSG). 2 consecutive EF-hand domains span residues 200 to 235 (RAKK…CFGI) and 320 to 355 (EGVQ…CSAP). Aspartate 213, aspartate 215, aspartate 217, tyrosine 219, glutamate 224, aspartate 333, aspartate 335, aspartate 337, cysteine 339, and glutamate 344 together coordinate Ca(2+). The Miro 2 domain occupies 436 to 601 (RKVFQCLVVG…FEQLAMMAVY (166 aa)). GTP contacts are provided by residues 445–452 (GAKDAGKT), 482–486 (KVKEE), and 549–552 (TKVE). Residues 614–634 (NLLSKITFGAAIVALAGFLVL) form a helical; Anchor for type IV membrane protein membrane-spanning segment. Over 635-637 (KNL) the chain is Mitochondrial intermembrane.

The protein belongs to the mitochondrial Rho GTPase family.

The protein resides in the mitochondrion outer membrane. Its function is as follows. Mitochondrial GTPase involved in mitochondrial trafficking. Probably involved in control of anterograde transport of mitochondria and their subcellular distribution. This chain is Mitochondrial Rho GTPase 1, found in Caenorhabditis briggsae.